The sequence spans 335 residues: Geranylgeranyl pyrophosphate synthase BTS1 (335 aa).

Residues Lys-36, Arg-39, and His-68 each contribute to the isopentenyl diphosphate site. Asp-75 and Asp-79 together coordinate Mg(2+). Residue Arg-84 coordinates dimethylallyl diphosphate. Arg-85 contacts isopentenyl diphosphate. Dimethylallyl diphosphate-binding residues include Lys-169, Thr-170, Gln-206, Asn-213, Lys-223, and Lys-233.

Belongs to the FPP/GGPP synthase family. It depends on Mg(2+) as a cofactor.

It is found in the cytoplasm. The enzyme catalyses isopentenyl diphosphate + dimethylallyl diphosphate = (2E)-geranyl diphosphate + diphosphate. The catalysed reaction is isopentenyl diphosphate + (2E)-geranyl diphosphate = (2E,6E)-farnesyl diphosphate + diphosphate. It carries out the reaction isopentenyl diphosphate + (2E,6E)-farnesyl diphosphate = (2E,6E,10E)-geranylgeranyl diphosphate + diphosphate. It participates in isoprenoid biosynthesis; farnesyl diphosphate biosynthesis; farnesyl diphosphate from geranyl diphosphate and isopentenyl diphosphate: step 1/1. The protein operates within isoprenoid biosynthesis; geranyl diphosphate biosynthesis; geranyl diphosphate from dimethylallyl diphosphate and isopentenyl diphosphate: step 1/1. Its pathway is isoprenoid biosynthesis; geranylgeranyl diphosphate biosynthesis; geranylgeranyl diphosphate from farnesyl diphosphate and isopentenyl diphosphate: step 1/1. Catalyzes the trans-addition of the 3 molecules of IPP onto DMAPP to form geranylgeranyl pyrophosphate. Required for the membrane attachment of YPT1 and SEC4. May be involved in vesicle trafficking and protein sorting. This Saccharomyces cerevisiae (strain ATCC 204508 / S288c) (Baker's yeast) protein is Geranylgeranyl pyrophosphate synthase BTS1 (BTS1).